The primary structure comprises 883 residues: DNA double-strand break repair Rad50 ATPase (883 aa).

ATP-binding positions include R12, N32–S38, and Q134. Residues E218–K420 adopt a coiled-coil conformation. Residues I395–K492 form the Zinc-hook domain. The Zn(2+) site is built by C440 and C443. Coiled coils occupy residues R452–G585 and E620–E741. ATP is bound at residue F790 to E795.

It belongs to the SMC family. RAD50 subfamily. In terms of assembly, homodimer. Forms a heterotetramer composed of two Mre11 subunits and two Rad50 subunits. Zn(2+) is required as a cofactor.

In terms of biological role, part of the Rad50/Mre11 complex, which is involved in the early steps of DNA double-strand break (DSB) repair. The complex may facilitate opening of the processed DNA ends to aid in the recruitment of HerA and NurA. Rad50 controls the balance between DNA end bridging and DNA resection via ATP-dependent structural rearrangements of the Rad50/Mre11 complex. In Thermococcus kodakarensis (strain ATCC BAA-918 / JCM 12380 / KOD1) (Pyrococcus kodakaraensis (strain KOD1)), this protein is DNA double-strand break repair Rad50 ATPase.